The sequence spans 127 residues: Small ribosomal subunit protein uS12 (127 aa).

D89 is subject to 3-methylthioaspartic acid.

This sequence belongs to the universal ribosomal protein uS12 family. In terms of assembly, part of the 30S ribosomal subunit. Contacts proteins S8 and S17. May interact with IF1 in the 30S initiation complex.

With S4 and S5 plays an important role in translational accuracy. In terms of biological role, interacts with and stabilizes bases of the 16S rRNA that are involved in tRNA selection in the A site and with the mRNA backbone. Located at the interface of the 30S and 50S subunits, it traverses the body of the 30S subunit contacting proteins on the other side and probably holding the rRNA structure together. The combined cluster of proteins S8, S12 and S17 appears to hold together the shoulder and platform of the 30S subunit. The sequence is that of Small ribosomal subunit protein uS12 from Campylobacter lari (strain RM2100 / D67 / ATCC BAA-1060).